The following is a 729-amino-acid chain: Rab-like protein 6 (729 aa).

Met-1 is modified (N-acetylmethionine). The small GTPase-like stretch occupies residues 39–279; that stretch reads GVQYNMKIVI…IFLEMMEARS (241 aa). GTP contacts are provided by residues 50–57, 100–104, and 177–179; these read GDRNTGKT, DVVDK, and YRD. Residues 281–729 are disordered; the sequence is GHASPLAANG…HPGGGDYEEL (449 aa). Over residues 290-315 the composition is skewed to low complexity; that stretch reads GQSPSPGSQSPVVPAGAVSTGSSSPG. Over residues 331–351 the composition is skewed to pro residues; the sequence is SSVPPVPPSEALPPPACPSAP. The span at 395 to 416 shows a compositional bias: basic and acidic residues; sequence PDDRLDRSFLEDTTPARDEKKV. Phosphoserine is present on residues Ser-402, Ser-425, Ser-427, Ser-470, Ser-471, Ser-492, Ser-525, and Ser-577. The segment covering 489 to 502 has biased composition (polar residues); it reads QQCSEPETKWSSIP. The span at 581–595 shows a compositional bias: basic and acidic residues; it reads DTQRRADDFPVRDDP. Residue Ser-596 is modified to Phosphoserine. Acidic residues predominate over residues 596-605; that stretch reads SDVTDEDEGP. The residue at position 599 (Thr-599) is a Phosphothreonine. The span at 606–615 shows a compositional bias: pro residues; the sequence is AEPPPPPKLP. Residues 635 to 652 show a composition bias toward basic and acidic residues; it reads AGPKESSEEGKEGKTPSK. 2 positions are modified to phosphoserine: Ser-640 and Ser-641. Positions 655–693 are interaction with CDKN2A; the sequence is KKKKKKGKEEEEKAAKKKSKHKKSKDKEEGKEERRRRQQ. Residues 669-678 are compositionally biased toward basic residues; the sequence is AKKKSKHKKS. Positions 679–689 are enriched in basic and acidic residues; sequence KDKEEGKEERR. Positions 711-729 are enriched in gly residues; that stretch reads LGGGAPGGRHPGGGDYEEL.

The protein belongs to the small GTPase superfamily. Rab family. Isoform 1 is O-glycosylated, while other isoforms are not.

The protein localises to the cytoplasm. It localises to the nucleus. Its function is as follows. May enhance cellular proliferation. May reduce growth inhibitory activity of CDKN2A. In Homo sapiens (Human), this protein is Rab-like protein 6 (RABL6).